Consider the following 176-residue polypeptide: MDLPGPIHDFLLVFLGSGLLVGGLGVVLLPNPIFSAFSLGFVLVCISLLYILSNSHFVAAAQLLIYVGAINVLIIFAVMFMNDSEYSTDLNLWTVGNGITSLVCTTILFSLMSTILDTSWYGVIWTTRLNQILEQDLISNSQQIGIHLSTDFFLPFELISIILLVALIGAISMARQ.

Transmembrane regions (helical) follow at residues 10–30 (FLLV…VLLP), 32–52 (PIFS…LYIL), 61–81 (AQLL…VMFM), 92–112 (LWTV…FSLM), and 152–172 (FFLP…GAIS).

This sequence belongs to the complex I subunit 6 family. In terms of assembly, NDH is composed of at least 16 different subunits, 5 of which are encoded in the nucleus.

The protein localises to the plastid. Its subcellular location is the chloroplast thylakoid membrane. It catalyses the reaction a plastoquinone + NADH + (n+1) H(+)(in) = a plastoquinol + NAD(+) + n H(+)(out). The catalysed reaction is a plastoquinone + NADPH + (n+1) H(+)(in) = a plastoquinol + NADP(+) + n H(+)(out). Its function is as follows. NDH shuttles electrons from NAD(P)H:plastoquinone, via FMN and iron-sulfur (Fe-S) centers, to quinones in the photosynthetic chain and possibly in a chloroplast respiratory chain. The immediate electron acceptor for the enzyme in this species is believed to be plastoquinone. Couples the redox reaction to proton translocation, and thus conserves the redox energy in a proton gradient. This is NAD(P)H-quinone oxidoreductase subunit 6, chloroplastic (ndhG) from Barbarea verna (Land cress).